A 484-amino-acid polypeptide reads, in one-letter code: Acetyl-coenzyme A carboxylase carboxyl transferase subunit beta, chloroplastic (484 aa).

Positions 223 to 484 (LWIQCDNCYG…LHAFFPLNKN (262 aa)) constitute a CoA carboxyltransferase N-terminal domain. The Zn(2+) site is built by Cys227, Cys230, Cys243, and Cys246. The C4-type zinc finger occupies 227–246 (CDNCYGLMYKKVKINVCEQC).

Belongs to the AccD/PCCB family. Acetyl-CoA carboxylase is a heterohexamer composed of biotin carboxyl carrier protein, biotin carboxylase and 2 subunits each of ACCase subunit alpha and ACCase plastid-coded subunit beta (accD). Zn(2+) is required as a cofactor.

Its subcellular location is the plastid. The protein resides in the chloroplast stroma. The catalysed reaction is N(6)-carboxybiotinyl-L-lysyl-[protein] + acetyl-CoA = N(6)-biotinyl-L-lysyl-[protein] + malonyl-CoA. The protein operates within lipid metabolism; malonyl-CoA biosynthesis; malonyl-CoA from acetyl-CoA: step 1/1. Its function is as follows. Component of the acetyl coenzyme A carboxylase (ACC) complex. Biotin carboxylase (BC) catalyzes the carboxylation of biotin on its carrier protein (BCCP) and then the CO(2) group is transferred by the transcarboxylase to acetyl-CoA to form malonyl-CoA. The chain is Acetyl-coenzyme A carboxylase carboxyl transferase subunit beta, chloroplastic from Capsella bursa-pastoris (Shepherd's purse).